The sequence spans 1025 residues: Putative receptor-like protein kinase At3g47110 (1025 aa).

The N-terminal stretch at 1–30 is a signal peptide; the sequence is MGVPCIVMRLILVSALLVSVSLEHSDMVCA. Residues 31–653 lie on the Extracellular side of the membrane; that stretch reads QTIRLTEETD…LPRRHSSVRK (623 aa). Asparagine 63 and asparagine 103 each carry an N-linked (GlcNAc...) asparagine glycan. 10 LRR repeats span residues 104–128, 130–151, 152–175, 176–200, 202–224, 226–248, 249–271, 273–297, 298–323, and 325–344; these read LSFL…VGNL, RLQY…VLSN, CSSL…EFGS, LSKL…LGNL, SLQM…IARL, QMIF…IYNL, SSLI…DFGS, LPNL…LSNI, SSLR…RLQN, and LLLG…DLDF. Asparagine 135 and asparagine 151 each carry an N-linked (GlcNAc...) asparagine glycan. 2 N-linked (GlcNAc...) asparagine glycosylation sites follow: asparagine 188 and asparagine 199. An N-linked (GlcNAc...) asparagine glycan is attached at asparagine 247. N-linked (GlcNAc...) asparagine glycosylation occurs at asparagine 296. Residues asparagine 331, asparagine 336, asparagine 350, and asparagine 374 are each glycosylated (N-linked (GlcNAc...) asparagine). LRR repeat units follow at residues 351–374, 376–400, 401–424, 426–448, 449–472, 473–496, 498–520, 521–544, 546–567, 568–593, and 595–616; these read CSQL…FIAN, STQL…IGNL, VSLQ…LGEL, ELRK…LGNI, SGLT…LGSC, SYLL…LMEL, SLVV…IGKL, KFLL…LANC, SLEF…IRGL, TGLR…NFSK, and QNLN…VFRN. N-linked (GlcNAc...) asparagine glycosylation is found at asparagine 447, asparagine 458, asparagine 486, and asparagine 503. 4 N-linked (GlcNAc...) asparagine glycosylation sites follow: asparagine 579, asparagine 590, asparagine 598, and asparagine 616. A helical transmembrane segment spans residues 654-674; the sequence is IITICVSAVMAALLLLCLCVV. The Cytoplasmic segment spans residues 675–1025; that stretch reads YLCWYKLRVK…RESFFRDEET (351 aa). Residue threonine 716 is modified to Phosphothreonine. The region spanning 719–1020 is the Protein kinase domain; sequence FSSSNLIGSG…KLVSIRESFF (302 aa). Residues 725 to 733 and lysine 748 contribute to the ATP site; that span reads IGSGNFGAV. Tyrosine 798 and tyrosine 843 each carry phosphotyrosine. Catalysis depends on aspartate 856, which acts as the Proton acceptor. Tyrosine 904 is modified (phosphotyrosine).

Belongs to the protein kinase superfamily. Ser/Thr protein kinase family.

It localises to the cell membrane. The catalysed reaction is L-seryl-[protein] + ATP = O-phospho-L-seryl-[protein] + ADP + H(+). It carries out the reaction L-threonyl-[protein] + ATP = O-phospho-L-threonyl-[protein] + ADP + H(+). This is Putative receptor-like protein kinase At3g47110 from Arabidopsis thaliana (Mouse-ear cress).